The following is a 307-amino-acid chain: Thymidylate synthase (307 aa).

Residues 1–22 (MLVEGSELQSGAQQPRTEAPQH) form a disordered region. Polar residues predominate over residues 7 to 16 (ELQSGAQQPR). Residue Arg44 participates in dUMP binding. Phosphoserine is present on Ser108. Residues 169–170 (RR), 189–190 (CH), 209–212 (RSGD), Asn220, and 250–252 (HIY) each bind dUMP. Cys189 serves as the catalytic Nucleophile. Asp212 serves as a coordination point for (6R)-5,10-methylene-5,6,7,8-tetrahydrofolate. Residues Lys286 and Lys302 each participate in a glycyl lysine isopeptide (Lys-Gly) (interchain with G-Cter in SUMO2) cross-link. Ala306 provides a ligand contact to (6R)-5,10-methylene-5,6,7,8-tetrahydrofolate.

This sequence belongs to the thymidylate synthase family. Homodimer.

The protein resides in the nucleus. It localises to the cytoplasm. It is found in the mitochondrion. Its subcellular location is the mitochondrion matrix. The protein localises to the mitochondrion inner membrane. The catalysed reaction is dUMP + (6R)-5,10-methylene-5,6,7,8-tetrahydrofolate = 7,8-dihydrofolate + dTMP. Its pathway is pyrimidine metabolism; dTTP biosynthesis. Catalyzes the reductive methylation of 2'-deoxyuridine 5'-monophosphate (dUMP) to thymidine 5'-monophosphate (dTMP), using the cosubstrate, 5,10- methylenetetrahydrofolate (CH2H4folate) as a 1-carbon donor and reductant and contributes to the de novo mitochondrial thymidylate biosynthesis pathway. The polypeptide is Thymidylate synthase (Tyms) (Rattus norvegicus (Rat)).